The following is a 290-amino-acid chain: MKPNSEEEEELVQGVGPWDECFEVAVQLALRAGQIIRKALTEEKHVSTKTSAADLVTETDHRVEDLIVSELRKRFPSHRFIAEEATASGAKCVLTHSPTWIIDPIDGTCNFVHRFPTVAVSIGFAVHQELEFGVIHHCTEERLYTGRRGQGAFCNGQRLQVSRETDLAKALVLTEIGPKRDPDTLKVFLSNMERLLHAKAHGVRVIGSSTLALCYLASGAADAYYQFGLHCWDLAAATVIIREAGGIVIDTSGGPLDLMSCRVVAAGTREMAVLIAQALQTINYGRDDEK.

4 residues coordinate Mg(2+): Glu-83, Asp-103, Ile-105, and Asp-106. Glu-83 is a binding site for substrate. Substrate-binding positions include 105-108 (IDGT), 207-209 (GSS), Gln-226, and Asp-233. Asp-233 contributes to the Mg(2+) binding site.

Belongs to the inositol monophosphatase superfamily. Homodimer. The cofactor is Mg(2+).

Its subcellular location is the cytoplasm. It catalyses the reaction a myo-inositol phosphate + H2O = myo-inositol + phosphate. It functions in the pathway polyol metabolism; myo-inositol biosynthesis; myo-inositol from D-glucose 6-phosphate: step 2/2. Functionally, can use myo-inositol monophosphates, scylloinositol 1,4-diphosphate, glucose-1-phosphate, beta-glycerophosphate, and 2'-AMP as substrates. Has been implicated as the pharmacological target for lithium Li(+) action in brain. This is Inositol monophosphatase 2 (Impa2) from Rattus norvegicus (Rat).